The chain runs to 305 residues: tRNA pseudouridine synthase B (305 aa).

The active-site Nucleophile is the aspartate 39.

Belongs to the pseudouridine synthase TruB family. Type 1 subfamily.

The catalysed reaction is uridine(55) in tRNA = pseudouridine(55) in tRNA. Functionally, responsible for synthesis of pseudouridine from uracil-55 in the psi GC loop of transfer RNAs. The chain is tRNA pseudouridine synthase B from Staphylococcus aureus (strain MRSA252).